The primary structure comprises 253 residues: Glucosamine-6-phosphate deaminase (253 aa).

The active-site Proton acceptor; for enolization step is D67. N136 functions as the For ring-opening step in the catalytic mechanism. H138 functions as the Proton acceptor; for ring-opening step in the catalytic mechanism. Residue E143 is the For ring-opening step of the active site.

Belongs to the glucosamine/galactosamine-6-phosphate isomerase family. NagB subfamily.

It carries out the reaction alpha-D-glucosamine 6-phosphate + H2O = beta-D-fructose 6-phosphate + NH4(+). It participates in amino-sugar metabolism; N-acetylneuraminate degradation; D-fructose 6-phosphate from N-acetylneuraminate: step 5/5. In terms of biological role, catalyzes the reversible isomerization-deamination of glucosamine 6-phosphate (GlcN6P) to form fructose 6-phosphate (Fru6P) and ammonium ion. This is Glucosamine-6-phosphate deaminase from Thermoanaerobacter sp. (strain X514).